The sequence spans 256 residues: Alcohol dehydrogenase (256 aa).

12–35 is an NAD(+) binding site; the sequence is FVAGLGGIGLDTSKELVKRDLKNL. Residue Ser140 participates in substrate binding. Catalysis depends on Tyr153, which acts as the Proton acceptor.

It belongs to the short-chain dehydrogenases/reductases (SDR) family. As to quaternary structure, homodimer.

The enzyme catalyses a primary alcohol + NAD(+) = an aldehyde + NADH + H(+). It carries out the reaction a secondary alcohol + NAD(+) = a ketone + NADH + H(+). The polypeptide is Alcohol dehydrogenase (Adh) (Drosophila teissieri (Fruit fly)).